A 254-amino-acid polypeptide reads, in one-letter code: Nickel import ATP-binding protein NikD (254 aa).

An ABC transporter domain is found at 2-241 (PQQIELRNIA…PKHAVTRSLV (240 aa)). An ATP-binding site is contributed by 36–43 (GGSGSGKS).

The protein belongs to the ABC transporter superfamily. Nickel importer (TC 3.A.1.5.3) family. In terms of assembly, the complex is composed of two ATP-binding proteins (NikD and NikE), two transmembrane proteins (NikB and NikC) and a solute-binding protein (NikA).

It localises to the cell inner membrane. The enzyme catalyses Ni(2+)(out) + ATP + H2O = Ni(2+)(in) + ADP + phosphate + H(+). Its function is as follows. Part of the ABC transporter complex NikABCDE involved in nickel import. Responsible for energy coupling to the transport system. The polypeptide is Nickel import ATP-binding protein NikD (Escherichia coli (strain UTI89 / UPEC)).